We begin with the raw amino-acid sequence, 473 residues long: tRNA-2-methylthio-N(6)-dimethylallyladenosine synthase (473 aa).

The MTTase N-terminal domain occupies 5-125; the sequence is RKLHIKSFGC…LPQLLAEAAR (121 aa). Residues C14, C50, C88, C166, C170, and C173 each contribute to the [4Fe-4S] cluster site. The Radical SAM core domain occupies 152–384; that stretch reads RARGISAFVT…QELIDSQQAA (233 aa). The TRAM domain maps to 387-449; it reads AAVIGTTVEV…RYSLIGELAA (63 aa). The tract at residues 452 to 473 is disordered; sequence QHSGFATRSEDSPQSLPITTGA.

The protein belongs to the methylthiotransferase family. MiaB subfamily. Monomer. [4Fe-4S] cluster serves as cofactor.

The protein localises to the cytoplasm. The enzyme catalyses N(6)-dimethylallyladenosine(37) in tRNA + (sulfur carrier)-SH + AH2 + 2 S-adenosyl-L-methionine = 2-methylsulfanyl-N(6)-dimethylallyladenosine(37) in tRNA + (sulfur carrier)-H + 5'-deoxyadenosine + L-methionine + A + S-adenosyl-L-homocysteine + 2 H(+). Catalyzes the methylthiolation of N6-(dimethylallyl)adenosine (i(6)A), leading to the formation of 2-methylthio-N6-(dimethylallyl)adenosine (ms(2)i(6)A) at position 37 in tRNAs that read codons beginning with uridine. The chain is tRNA-2-methylthio-N(6)-dimethylallyladenosine synthase from Rhodopseudomonas palustris (strain BisB18).